The primary structure comprises 329 residues: Cytosolic sulfotransferase 6 (329 aa).

74–79 (KCGTTW) contributes to the 3'-phosphoadenylyl sulfate binding site. His140 functions as the Proton acceptor in the catalytic mechanism. Residues Arg162, Ser170, and 295–297 (RKG) each bind 3'-phosphoadenylyl sulfate.

The protein belongs to the sulfotransferase 1 family.

The protein resides in the cytoplasm. Its function is as follows. Sulfotransferase that utilizes 3'-phospho-5'-adenylyl sulfate (PAPS) as sulfonate donor. The protein is Cytosolic sulfotransferase 6 (SOT6) of Arabidopsis thaliana (Mouse-ear cress).